Reading from the N-terminus, the 270-residue chain is Gap junction beta-3 protein (270 aa).

The Cytoplasmic portion of the chain corresponds to 1–20; sequence MDWKKLQDLLSGVNQYSTAF. Residues 21–40 traverse the membrane as a helical segment; that stretch reads GRIWLSVVFVFRVLVYVVAA. Residues 41 to 75 are Extracellular-facing; the sequence is ERVWGDEQKDFDCNTRQPGCTNVCYDNFFPISNIR. A helical transmembrane segment spans residues 76-98; the sequence is LWALQLIFVTCPSMLVILHVAYR. At 99–126 the chain is on the cytoplasmic side; it reads EERERKHRQKHGEHCAKLYSHPGKKHGG. A helical membrane pass occupies residues 127-149; it reads LWWTYLFSLIFKLIIELVFLYVL. Residues 150–188 lie on the Extracellular side of the membrane; that stretch reads HTLWHGFTMPRLVQCASVVPCPNTVDCYIARPTEKKVFT. A helical membrane pass occupies residues 189 to 211; sequence YFMVGASAVCIILTICEICYLIF. The Cytoplasmic segment spans residues 212–270; it reads HRIMRGLSKDKSTKSISSPKSSSRASTCRCHHKLLESGDLEAVPADDKLQASAPSLTPI.

This sequence belongs to the connexin family. Beta-type (group I) subfamily. In terms of assembly, a connexon is composed of a hexamer of connexins. Interacts with CNST.

It localises to the cell membrane. The protein localises to the cell junction. It is found in the gap junction. In terms of biological role, one gap junction consists of a cluster of closely packed pairs of transmembrane channels, the connexons, through which materials of low MW diffuse from one cell to a neighboring cell. This is Gap junction beta-3 protein (Gjb3) from Rattus norvegicus (Rat).